The chain runs to 157 residues: Ribosomal RNA large subunit methyltransferase H (157 aa).

Residues Leu73, Gly104, and 123 to 128 (LGPLTL) each bind S-adenosyl-L-methionine.

This sequence belongs to the RNA methyltransferase RlmH family. In terms of assembly, homodimer.

The protein localises to the cytoplasm. It carries out the reaction pseudouridine(1915) in 23S rRNA + S-adenosyl-L-methionine = N(3)-methylpseudouridine(1915) in 23S rRNA + S-adenosyl-L-homocysteine + H(+). In terms of biological role, specifically methylates the pseudouridine at position 1915 (m3Psi1915) in 23S rRNA. The polypeptide is Ribosomal RNA large subunit methyltransferase H (Xylella fastidiosa (strain M23)).